The following is a 406-amino-acid chain: High mobility group nucleosome-binding domain-containing protein 5 (406 aa).

A disordered region spans residues 1 to 406 (MPKRKAAGDV…GEKEEPLSIV (406 aa)). At Thr29 the chain carries Phosphothreonine. Basic residues predominate over residues 35-44 (KRASTSRKTK). Composition is skewed to basic and acidic residues over residues 63 to 72 (TKPEDVKDEC), 92 to 101 (MEAEEVKEQI), 110 to 126 (GEKK…DELK), 136 to 159 (EDGK…EGLN), and 166 to 187 (KSED…KGED). Lys64 participates in a covalent cross-link: Glycyl lysine isopeptide (Lys-Gly) (interchain with G-Cter in SUMO2). A Glycyl lysine isopeptide (Lys-Gly) (interchain with G-Cter in SUMO1); alternate cross-link involves residue Lys98. Lys98 participates in a covalent cross-link: Glycyl lysine isopeptide (Lys-Gly) (interchain with G-Cter in SUMO2); alternate. Lys121 participates in a covalent cross-link: Glycyl lysine isopeptide (Lys-Gly) (interchain with G-Cter in SUMO2). Positions 188 to 200 (GKEEGDEKEEEKD) are enriched in acidic residues. 4 stretches are compositionally biased toward basic and acidic residues: residues 201 to 239 (DKEG…KEGQ), 246 to 266 (EDLH…KEGQ), 272 to 284 (KEIH…KEGQ), and 290 to 311 (KEYL…KEGQ). Over residues 312–325 (PEEDGKEDQPEEDG) the composition is skewed to acidic residues. The segment covering 326–365 (KEGQCKEDGKEGHHEEGGKEDLHEEDGKEKDGGKEDRKEE) has biased composition (basic and acidic residues). Positions 366–376 (GEQEVAVDEGS) are enriched in acidic residues. Positions 377 to 406 (DENKVEAEEEGAENKDFKQDGEKEEPLSIV) are enriched in basic and acidic residues.

The protein belongs to the HMGN family. In terms of tissue distribution, expressed in liver, spleen, lung, heart, kidney, muscle and brain (at protein level). Widely expressed with highest levels in submaxillary gland, thymus, kidney and liver and lowest levels in brain, lung, pancreas and eye.

The protein resides in the nucleus. Its function is as follows. Preferentially binds to euchromatin and modulates cellular transcription by counteracting linker histone-mediated chromatin compaction. The protein is High mobility group nucleosome-binding domain-containing protein 5 (Hmgn5) of Mus musculus (Mouse).